The sequence spans 152 residues: Ribosome maturation factor RimP (152 aa).

This sequence belongs to the RimP family.

It localises to the cytoplasm. Its function is as follows. Required for maturation of 30S ribosomal subunits. This Burkholderia lata (strain ATCC 17760 / DSM 23089 / LMG 22485 / NCIMB 9086 / R18194 / 383) protein is Ribosome maturation factor RimP.